Consider the following 85-residue polypeptide: Sec-independent protein translocase protein TatA (85 aa).

Residues 1-21 (MGIFDWKHWLIILIVVVLVFG) traverse the membrane as a helical segment. A disordered region spans residues 43–85 (VNTEEGENRPAEPQTGTSAGDTLNKTQTIEGQAQKVDTPVRKD). Positions 56–73 (QTGTSAGDTLNKTQTIEG) are enriched in polar residues.

The protein belongs to the TatA/E family. As to quaternary structure, the Tat system comprises two distinct complexes: a TatABC complex, containing multiple copies of TatA, TatB and TatC subunits, and a separate TatA complex, containing only TatA subunits. Substrates initially bind to the TatABC complex, which probably triggers association of the separate TatA complex to form the active translocon.

The protein localises to the cell inner membrane. Functionally, part of the twin-arginine translocation (Tat) system that transports large folded proteins containing a characteristic twin-arginine motif in their signal peptide across membranes. TatA could form the protein-conducting channel of the Tat system. The sequence is that of Sec-independent protein translocase protein TatA from Azotobacter vinelandii (strain DJ / ATCC BAA-1303).